The primary structure comprises 444 residues: UDP-N-acetylglucosamine 1-carboxyvinyltransferase (444 aa).

Phosphoenolpyruvate is bound at residue 22–23 (KN). Arg-94 serves as a coordination point for UDP-N-acetyl-alpha-D-glucosamine. The Proton donor role is filled by Asp-119. UDP-N-acetyl-alpha-D-glucosamine contacts are provided by Asp-309 and Val-331.

It belongs to the EPSP synthase family. MurA subfamily.

The protein resides in the cytoplasm. It carries out the reaction phosphoenolpyruvate + UDP-N-acetyl-alpha-D-glucosamine = UDP-N-acetyl-3-O-(1-carboxyvinyl)-alpha-D-glucosamine + phosphate. Its pathway is cell wall biogenesis; peptidoglycan biosynthesis. Cell wall formation. Adds enolpyruvyl to UDP-N-acetylglucosamine. The polypeptide is UDP-N-acetylglucosamine 1-carboxyvinyltransferase (Chlamydia abortus (strain DSM 27085 / S26/3) (Chlamydophila abortus)).